Consider the following 716-residue polypeptide: Phospholipid phosphatase-related protein type 3 (716 aa).

3 helical membrane passes run 18–38 (LPCF…SLYF), 70–90 (LIPL…SIMV), and 131–151 (FVGV…VIQL). N-linked (GlcNAc...) asparagine glycosylation is present at asparagine 167. The next 3 membrane-spanning stretches (helical) occupy residues 205–225 (HATL…SVIS), 231–251 (LKPI…LTQI), and 261–281 (VYAG…HAVG). Residues 311–334 (SMYQQNKSVSTDELGPPGRLEGVP) are disordered. Over residues 312 to 321 (MYQQNKSVST) the composition is skewed to polar residues. A glycan (N-linked (GlcNAc...) asparagine) is linked at asparagine 316. 2 positions are modified to phosphoserine: serine 320 and serine 351. Phosphothreonine is present on threonine 374. Residues 416-488 (GRGLGLPDEA…RVILPPRPGP (73 aa)) form a disordered region. A Phosphoserine modification is found at serine 426. The span at 437–460 (VAEEEEEEEEEEEEEEEEEEEEEG) shows a compositional bias: acidic residues. Serine 506 carries the phosphoserine modification. The segment at 548-589 (AMSKAAGGPKAETASSSSASSDSSQYRSPSDRDSASIVTIDA) is disordered. A compositionally biased stretch (low complexity) spans 562–575 (SSSSASSDSSQYRS). The residue at position 641 (serine 641) is a Phosphoserine. Residues 664 to 694 (GEGLPPPGASEGALGAGSRESTLRRQVGALG) are disordered.

Belongs to the PA-phosphatase related phosphoesterase family.

The protein localises to the membrane. The chain is Phospholipid phosphatase-related protein type 3 from Rattus norvegicus (Rat).